We begin with the raw amino-acid sequence, 390 residues long: Succinyl-diaminopimelate desuccinylase (390 aa).

Histidine 75 contacts Zn(2+). The active site involves aspartate 77. Residue aspartate 108 coordinates Zn(2+). Glutamate 141 acts as the Proton acceptor in catalysis. Zn(2+) contacts are provided by glutamate 142, glutamate 170, and histidine 359.

The protein belongs to the peptidase M20A family. DapE subfamily. Homodimer. Zn(2+) is required as a cofactor. The cofactor is Co(2+).

It carries out the reaction N-succinyl-(2S,6S)-2,6-diaminopimelate + H2O = (2S,6S)-2,6-diaminopimelate + succinate. It participates in amino-acid biosynthesis; L-lysine biosynthesis via DAP pathway; LL-2,6-diaminopimelate from (S)-tetrahydrodipicolinate (succinylase route): step 3/3. Catalyzes the hydrolysis of N-succinyl-L,L-diaminopimelic acid (SDAP), forming succinate and LL-2,6-diaminopimelate (DAP), an intermediate involved in the bacterial biosynthesis of lysine and meso-diaminopimelic acid, an essential component of bacterial cell walls. The polypeptide is Succinyl-diaminopimelate desuccinylase (Maricaulis maris (strain MCS10) (Caulobacter maris)).